The primary structure comprises 92 residues: PqqA binding protein (92 aa).

This sequence belongs to the PqqD family. As to quaternary structure, monomer. Interacts with PqqE.

It functions in the pathway cofactor biosynthesis; pyrroloquinoline quinone biosynthesis. In terms of biological role, functions as a PqqA binding protein and presents PqqA to PqqE, in the pyrroloquinoline quinone (PQQ) biosynthetic pathway. This Pseudomonas aeruginosa (strain UCBPP-PA14) protein is PqqA binding protein.